We begin with the raw amino-acid sequence, 593 residues long: Putative auxin response factor 15 (593 aa).

The TF-B3 DNA-binding region spans 126 to 228; the sequence is FTKVLTASDI…ELRVGIRRAR (103 aa). The PB1 domain maps to 511 to 592; that stretch reads RTCTKVQMQG…MVKRIYIQKR (82 aa).

The protein belongs to the ARF family. As to quaternary structure, homodimers and heterodimers.

The protein localises to the nucleus. Its function is as follows. Auxin response factors (ARFs) are transcriptional factors that bind specifically to the DNA sequence 5'-TGTCTC-3' found in the auxin-responsive promoter elements (AuxREs). Could act as transcriptional activator or repressor. Formation of heterodimers with Aux/IAA proteins may alter their ability to modulate early auxin response genes expression. The sequence is that of Putative auxin response factor 15 (ARF15) from Arabidopsis thaliana (Mouse-ear cress).